A 665-amino-acid chain; its full sequence is Fructose-1,6-bisphosphatase class 3 (665 aa).

Belongs to the FBPase class 3 family. Requires Mn(2+) as cofactor.

It carries out the reaction beta-D-fructose 1,6-bisphosphate + H2O = beta-D-fructose 6-phosphate + phosphate. It functions in the pathway carbohydrate biosynthesis; gluconeogenesis. The protein is Fructose-1,6-bisphosphatase class 3 of Clostridium acetobutylicum (strain ATCC 824 / DSM 792 / JCM 1419 / IAM 19013 / LMG 5710 / NBRC 13948 / NRRL B-527 / VKM B-1787 / 2291 / W).